Consider the following 978-residue polypeptide: Chitin synthase 3 (978 aa).

Positions 1 to 13 (MGFNPQGQGNGPN) are enriched in low complexity. Disordered stretches follow at residues 1 to 95 (MGFN…FDGH) and 108 to 127 (GHYP…YEYP). Residue Asn72 is glycosylated (N-linked (GlcNAc...) asparagine). Asn604 carries an N-linked (GlcNAc...) asparagine glycan. Transmembrane regions (helical) follow at residues 641–661 (LVNV…TTII), 686–706 (IVNV…FVLA), 719–739 (VLSF…TGYL), 775–795 (LIII…FLYL), 803–823 (SFPQ…VYAF), 908–928 (VILW…DDFI), and 946–966 (VLLY…LWFI).

The protein belongs to the chitin synthase family. Class III subfamily.

The protein localises to the cell membrane. It catalyses the reaction [(1-&gt;4)-N-acetyl-beta-D-glucosaminyl](n) + UDP-N-acetyl-alpha-D-glucosamine = [(1-&gt;4)-N-acetyl-beta-D-glucosaminyl](n+1) + UDP + H(+). Its function is as follows. Polymerizes chitin, a structural polymer of the cell wall and septum, by transferring the sugar moiety of UDP-GlcNAc to the non-reducing end of the growing chitin polymer. Is essential for viability. The chain is Chitin synthase 3 from Fusarium oxysporum f. sp. lycopersici (strain 4287 / CBS 123668 / FGSC 9935 / NRRL 34936) (Fusarium vascular wilt of tomato).